The sequence spans 426 residues: Colanic acid biosynthesis protein WcaK (426 aa).

It belongs to the polysaccharide pyruvyl transferase family.

Its pathway is slime biogenesis; slime polysaccharide biosynthesis. The sequence is that of Colanic acid biosynthesis protein WcaK (wcaK) from Escherichia coli (strain K12).